The primary structure comprises 324 residues: Putative glycosyltransferase R655 (324 aa).

It belongs to the glycosyltransferase 25 family.

The sequence is that of Putative glycosyltransferase R655 from Acanthamoeba polyphaga (Amoeba).